The chain runs to 79 residues: Protein RALF-like 15 (79 aa).

Residues 1 to 28 (MGMSKSIKVIVSLALILFLALAATKVEA) form the signal peptide. 2 cysteine pairs are disulfide-bonded: C46/C54 and C66/C72.

The protein belongs to the plant rapid alkalinization factor (RALF) family.

The protein resides in the secreted. Cell signaling peptide that may regulate plant stress, growth, and development. Mediates a rapid alkalinization of extracellular space by mediating a transient increase in the cytoplasmic Ca(2+) concentration leading to a calcium-dependent signaling events through a cell surface receptor and a concomitant activation of some intracellular mitogen-activated protein kinases. This Arabidopsis thaliana (Mouse-ear cress) protein is Protein RALF-like 15 (RALFL15).